The following is a 232-amino-acid chain: NAD(P)H-quinone oxidoreductase subunit K 1 (232 aa).

Cys-49, Cys-50, Cys-114, and Cys-145 together coordinate [4Fe-4S] cluster.

Belongs to the complex I 20 kDa subunit family. In terms of assembly, NDH-1 can be composed of about 15 different subunits; different subcomplexes with different compositions have been identified which probably have different functions. [4Fe-4S] cluster is required as a cofactor.

The protein localises to the cellular thylakoid membrane. It carries out the reaction a plastoquinone + NADH + (n+1) H(+)(in) = a plastoquinol + NAD(+) + n H(+)(out). The catalysed reaction is a plastoquinone + NADPH + (n+1) H(+)(in) = a plastoquinol + NADP(+) + n H(+)(out). NDH-1 shuttles electrons from an unknown electron donor, via FMN and iron-sulfur (Fe-S) centers, to quinones in the respiratory and/or the photosynthetic chain. The immediate electron acceptor for the enzyme in this species is believed to be plastoquinone. Couples the redox reaction to proton translocation, and thus conserves the redox energy in a proton gradient. Cyanobacterial NDH-1 also plays a role in inorganic carbon-concentration. The sequence is that of NAD(P)H-quinone oxidoreductase subunit K 1 from Acaryochloris marina (strain MBIC 11017).